A 218-amino-acid chain; its full sequence is GTP cyclohydrolase 1 (218 aa).

Positions 109, 112, and 180 each coordinate Zn(2+).

This sequence belongs to the GTP cyclohydrolase I family. In terms of assembly, toroid-shaped homodecamer, composed of two pentamers of five dimers.

The catalysed reaction is GTP + H2O = 7,8-dihydroneopterin 3'-triphosphate + formate + H(+). It participates in cofactor biosynthesis; 7,8-dihydroneopterin triphosphate biosynthesis; 7,8-dihydroneopterin triphosphate from GTP: step 1/1. This chain is GTP cyclohydrolase 1 (folE), found in Pasteurella multocida (strain Pm70).